The primary structure comprises 261 residues: Cytochrome c oxidase subunit 3 (261 aa).

Over 1 to 15 (MTHQTHAYHMVNPSP) the chain is Mitochondrial matrix. A helical membrane pass occupies residues 16–34 (WPLTGALSALLMTSGLAMW). The Mitochondrial intermembrane segment spans residues 35–40 (FHFNST). The helical transmembrane segment at 41 to 66 (ILLMIGLTTNTLTMYQWWRDVIREST) threads the bilayer. At 67–72 (FQGHHT) the chain is on the mitochondrial matrix side. The helical transmembrane segment at 73–105 (PTVQKGLRYGMILFIISEVLFFTGFFWAFYHSS) threads the bilayer. Topologically, residues 106 to 128 (LAPTPELGGCWPPTGIHPLNPLE) are mitochondrial intermembrane. Residues 129–152 (VPLLNTSVLLASGVSITWAHHSLM) traverse the membrane as a helical segment. Over 153 to 155 (EGN) the chain is Mitochondrial matrix. A helical transmembrane segment spans residues 156–183 (RYPMLQALFITIALGVYFTLLQASEYYE). The Mitochondrial intermembrane portion of the chain corresponds to 184–190 (APFTISD). A helical membrane pass occupies residues 191–223 (GVYGSTFFVATGFHGLHVIIGSTFLIVCFFRQL). Residues 224–232 (KFHFTSNHH) are Mitochondrial matrix-facing. The chain crosses the membrane as a helical span at residues 233–256 (FGFEAAAWYWHFVDVVWLFLYVSI). Topologically, residues 257–261 (YWWGS) are mitochondrial intermembrane.

Belongs to the cytochrome c oxidase subunit 3 family. In terms of assembly, component of the cytochrome c oxidase (complex IV, CIV), a multisubunit enzyme composed of 14 subunits. The complex is composed of a catalytic core of 3 subunits MT-CO1, MT-CO2 and MT-CO3, encoded in the mitochondrial DNA, and 11 supernumerary subunits COX4I, COX5A, COX5B, COX6A, COX6B, COX6C, COX7A, COX7B, COX7C, COX8 and NDUFA4, which are encoded in the nuclear genome. The complex exists as a monomer or a dimer and forms supercomplexes (SCs) in the inner mitochondrial membrane with NADH-ubiquinone oxidoreductase (complex I, CI) and ubiquinol-cytochrome c oxidoreductase (cytochrome b-c1 complex, complex III, CIII), resulting in different assemblies (supercomplex SCI(1)III(2)IV(1) and megacomplex MCI(2)III(2)IV(2)).

It is found in the mitochondrion inner membrane. The enzyme catalyses 4 Fe(II)-[cytochrome c] + O2 + 8 H(+)(in) = 4 Fe(III)-[cytochrome c] + 2 H2O + 4 H(+)(out). Component of the cytochrome c oxidase, the last enzyme in the mitochondrial electron transport chain which drives oxidative phosphorylation. The respiratory chain contains 3 multisubunit complexes succinate dehydrogenase (complex II, CII), ubiquinol-cytochrome c oxidoreductase (cytochrome b-c1 complex, complex III, CIII) and cytochrome c oxidase (complex IV, CIV), that cooperate to transfer electrons derived from NADH and succinate to molecular oxygen, creating an electrochemical gradient over the inner membrane that drives transmembrane transport and the ATP synthase. Cytochrome c oxidase is the component of the respiratory chain that catalyzes the reduction of oxygen to water. Electrons originating from reduced cytochrome c in the intermembrane space (IMS) are transferred via the dinuclear copper A center (CU(A)) of subunit 2 and heme A of subunit 1 to the active site in subunit 1, a binuclear center (BNC) formed by heme A3 and copper B (CU(B)). The BNC reduces molecular oxygen to 2 water molecules using 4 electrons from cytochrome c in the IMS and 4 protons from the mitochondrial matrix. This chain is Cytochrome c oxidase subunit 3 (MT-CO3), found in Raphicerus campestris (Steenbok).